The primary structure comprises 252 residues: Chitooligosaccharide deacetylase (252 aa).

His61 and His125 together coordinate Mg(2+).

The protein belongs to the YdjC deacetylase family. ChbG subfamily. As to quaternary structure, homodimer. Requires Mg(2+) as cofactor.

Its subcellular location is the cytoplasm. The catalysed reaction is N,N'-diacetylchitobiose + H2O = N-acetyl-beta-D-glucosaminyl-(1-&gt;4)-D-glucosamine + acetate. The enzyme catalyses diacetylchitobiose-6'-phosphate + H2O = N'-monoacetylchitobiose-6'-phosphate + acetate. It participates in glycan degradation; chitin degradation. In terms of biological role, involved in the degradation of chitin. ChbG is essential for growth on the acetylated chitooligosaccharides chitobiose and chitotriose but is dispensable for growth on cellobiose and chitosan dimer, the deacetylated form of chitobiose. Deacetylation of chitobiose-6-P and chitotriose-6-P is necessary for both the activation of the chb promoter by the regulatory protein ChbR and the hydrolysis of phosphorylated beta-glucosides by the phospho-beta-glucosidase ChbF. Catalyzes the removal of only one acetyl group from chitobiose-6-P to yield monoacetylchitobiose-6-P, the inducer of ChbR and the substrate of ChbF. The polypeptide is Chitooligosaccharide deacetylase (Salmonella typhimurium (strain LT2 / SGSC1412 / ATCC 700720)).